The primary structure comprises 312 residues: Olfactory receptor 2L8 (312 aa).

The Extracellular portion of the chain corresponds to 1 to 24 (MENYNQTSTDFILLGLFPPSRIDL). N-linked (GlcNAc...) asparagine glycosylation occurs at Asn5. The helical transmembrane segment at 25-48 (FFFILIVFIFLMALIGNLSMILLI) threads the bilayer. Over 49–56 (FLDTHLHT) the chain is Cytoplasmic. The helical transmembrane segment at 57-78 (PMYFLLSQLSLIDLNYISTIVP) threads the bilayer. Topologically, residues 79–99 (KMASDFLHGNKSISFTGCGIQ) are extracellular. N-linked (GlcNAc...) asparagine glycosylation is present at Asn88. A disulfide bridge connects residues Cys96 and Cys188. Residues 100–119 (SFFFLALGGAEALLLASMAY) form a helical membrane-spanning segment. Residues 120 to 138 (DRYIAICFPLHYLIRMSKR) are Cytoplasmic-facing. Residues 139–157 (VCVLMITGSWIIGSINACA) traverse the membrane as a helical segment. Over 158–194 (HTVYVLHIPYCRSRAINHFFCDVPAMVTLACMDTWVY) the chain is Extracellular. Residues 195 to 218 (EGTVFLSATIFLVFPFIGISCSYG) form a helical membrane-spanning segment. The Cytoplasmic portion of the chain corresponds to 219–235 (QVLFAVYHMKSAEGRKK). A helical membrane pass occupies residues 236 to 258 (AYLTCSTHLTVVTFYYAPFVYTY). The Extracellular portion of the chain corresponds to 259-271 (LRPRSLRSPTEDK). Residues 272–291 (VLAVFYTILTPMLNPIIYSL) form a helical membrane-spanning segment. The Cytoplasmic portion of the chain corresponds to 292–312 (RNKEVMGALTRVSQRICSVKM).

This sequence belongs to the G-protein coupled receptor 1 family.

Its subcellular location is the cell membrane. Its function is as follows. Odorant receptor. The sequence is that of Olfactory receptor 2L8 (OR2L8) from Homo sapiens (Human).